A 677-amino-acid polypeptide reads, in one-letter code: Pro-neuregulin-1, membrane-bound isoform (677 aa).

A compositionally biased stretch (basic and acidic residues) spans 1–12 (MAEKKKVKEGKG). Disordered regions lie at residues 1–43 (MAEK…KEIK) and 78–106 (GAKN…ISKA). Over 1–260 (MAEKKKVKEG…MEAEELYQKR (260 aa)) the chain is Extracellular. Over residues 13–24 (RKGKGKKDRKGK) the composition is skewed to basic residues. In terms of domain architecture, Ig-like C2-type spans 37–132 (PKLKEIKTQS…GNDTVTVNVT (96 aa)). Cys-57 and Cys-116 form a disulfide bridge. Basic and acidic residues predominate over residues 78–91 (GAKNKPDSKPEHIK). Residues Asn-124 and Asn-130 are each glycosylated (N-linked (GlcNAc...) asparagine). One can recognise an EGF-like domain in the interval 188-232 (HLIKCSDKEKTYCVNGGECYVLNGITSSNQFMCKCKPGFTGARCT). Intrachain disulfides connect Cys-192–Cys-206, Cys-200–Cys-220, and Cys-222–Cys-231. Residues 261–280 (VLTITGICIDLLVVGDMCVV) traverse the membrane as a helical segment. The Cytoplasmic segment spans residues 281-677 (DAYCKTKKQR…RKMTCKTLFI (397 aa)). The span at 294 to 315 (NDRLRQSLRERNKNITNKDNRP) shows a compositional bias: basic and acidic residues. 5 disordered regions span residues 294–326 (NDRL…PRKN), 350–375 (ETSF…PSHS), 397–418 (SVEN…GIGG), 457–479 (VEFK…ESSL), and 503–617 (PPRL…FLSI). Residues 351–375 (TSFSTSHYTSTTHHSTTVTQTPSHS) are compositionally biased toward low complexity. Over residues 397 to 407 (SVENSRHTSPT) the composition is skewed to polar residues. Residues 505–515 (RLREKRYDRKT) show a composition bias toward basic and acidic residues. The span at 568 to 578 (VNSRRQKRTKP) shows a compositional bias: basic residues. Residues 591-600 (DSSSESSTSE) are compositionally biased toward low complexity.

It belongs to the neuregulin family. In terms of processing, proteolytic cleavage close to the plasma membrane on the external face leads to the release of the soluble growth factor form. Extensive glycosylation precedes the proteolytic cleavage. As to expression, isoform alpha1 is expressed in brain and muscle. Isoform CRD is expressed in brain and spinal cord, but at very low level in muscle.

Its subcellular location is the cell membrane. It localises to the secreted. Functionally, direct ligand for the ERBB tyrosine kinase receptors. Induces expression of acetylcholine receptor in synaptic nuclei. This Xenopus laevis (African clawed frog) protein is Pro-neuregulin-1, membrane-bound isoform (nrg1).